A 646-amino-acid chain; its full sequence is Altered inheritance of mitochondria protein 9, mitochondrial (646 aa).

A mitochondrion-targeting transit peptide spans 1–34 (MLRIPSRIGSRQVLACAGRNLKCGSVMRHISRRN).

This sequence belongs to the AIM9 family.

It is found in the mitochondrion. The sequence is that of Altered inheritance of mitochondria protein 9, mitochondrial (AIM9) from Candida glabrata (strain ATCC 2001 / BCRC 20586 / JCM 3761 / NBRC 0622 / NRRL Y-65 / CBS 138) (Yeast).